The sequence spans 217 residues: Octanoyltransferase (217 aa).

The BPL/LPL catalytic domain occupies serine 32–histidine 207. Residues arginine 71–histidine 78, serine 138–glycine 140, and glycine 151–alanine 153 each bind substrate. The active-site Acyl-thioester intermediate is the cysteine 169.

Belongs to the LipB family.

Its subcellular location is the cytoplasm. The catalysed reaction is octanoyl-[ACP] + L-lysyl-[protein] = N(6)-octanoyl-L-lysyl-[protein] + holo-[ACP] + H(+). It participates in protein modification; protein lipoylation via endogenous pathway; protein N(6)-(lipoyl)lysine from octanoyl-[acyl-carrier-protein]: step 1/2. Catalyzes the transfer of endogenously produced octanoic acid from octanoyl-acyl-carrier-protein onto the lipoyl domains of lipoate-dependent enzymes. Lipoyl-ACP can also act as a substrate although octanoyl-ACP is likely to be the physiological substrate. This is Octanoyltransferase from Shewanella sp. (strain W3-18-1).